Consider the following 255-residue polypeptide: ParA family protein CPn_0805/CP_1066/CPj0805/CpB0834 (255 aa).

This sequence belongs to the ParA family.

The chain is ParA family protein CPn_0805/CP_1066/CPj0805/CpB0834 from Chlamydia pneumoniae (Chlamydophila pneumoniae).